The sequence spans 247 residues: Probable transcriptional regulatory protein Gbem_3313 (247 aa).

The protein belongs to the TACO1 family.

The protein localises to the cytoplasm. This is Probable transcriptional regulatory protein Gbem_3313 from Citrifermentans bemidjiense (strain ATCC BAA-1014 / DSM 16622 / JCM 12645 / Bem) (Geobacter bemidjiensis).